A 169-amino-acid polypeptide reads, in one-letter code: Positive control factor (169 aa).

The segment at residues 132–157 (YERIADLLGVKKSTVQTTIKRASLKM) is a DNA-binding region (H-T-H motif).

Functionally, positive regulatory protein that acts at the late promoter PL. In Bacillus subtilis (strain 168), this protein is Positive control factor (xpf).